The following is a 123-amino-acid chain: Small ribosomal subunit protein uS12c (123 aa).

It belongs to the universal ribosomal protein uS12 family. In terms of assembly, part of the 30S ribosomal subunit.

It is found in the plastid. The protein localises to the chloroplast. Functionally, with S4 and S5 plays an important role in translational accuracy. Located at the interface of the 30S and 50S subunits. In Huperzia lucidula (Shining clubmoss), this protein is Small ribosomal subunit protein uS12c (rps12).